A 1861-amino-acid polypeptide reads, in one-letter code: Protein TANC1 (1861 aa).

Methionine 1 carries the post-translational modification N-acetylmethionine. Disordered regions lie at residues 1–46 (MLKA…SSLP), 63–99 (SLPSSPLLPRQSHLVQSRVNKKSPGPVRKPKYVESPR), 206–225 (KSPCETISSPSSTLESKDSG), 257–311 (QKGV…MPRP), and 439–486 (QIAS…ISAE). Residues 8–21 (KSREGGKGGKKEAG) are compositionally biased toward basic and acidic residues. A phosphoserine mark is found at serine 63, serine 66, serine 67, serine 207, and serine 270. Positions 206–219 (KSPCETISSPSSTL) are enriched in polar residues. The span at 440-455 (IASNSPGSSPKTSDPT) shows a compositional bias: polar residues. The segment covering 461–480 (TPLLSPSSSTSASSTAKTPL) has biased composition (low complexity). Serine 465 carries the post-translational modification Phosphoserine. ANK repeat units lie at residues 896-928 (EGLSAALASLRNLYTPNVKVSRLLILGGANVNY), 934-963 (NNAPILCVQSHLGHEEVVTLLLEFGACLDG), 967-996 (NGMTALCYAAAAGHMKLVCLLTKKGVRVDH), 1000-1029 (KGQCALVHSALRGHGDILQYLLTCEWSPGP), 1040-1069 (ALQQALTAAASMGHSSVVQCLLGMEKEHEV), 1078-1107 (WGETALTAAAGRGKLEVCELLLGHGAAVSR), 1111-1140 (RGVPPLFCAARQGHWQIVRLLLERGCDVNL), 1144-1173 (QGRTPLMVAACEGHLSTVEFLLSKGAALSS), 1177-1206 (EGLSALSWACLKGHRAVVQYLVEEGAAIDQ), 1210-1239 (NGRTPLDLAAFYGDAETVLYLVEKGAVIEH), and 1243-1272 (SGMRPLDRAIGCRNTSVVVALLRKGAKLGN). 3 TPR repeats span residues 1289–1322 (LQKLMEEGNVMYKKGKMKEAAQRYQYALRKFPRE), 1336–1369 (VSLYLNLSRCRRKTNDFGMAEEFASKALELKPKS), and 1371–1403 (EAFYARARAKRNSRQFVAALADLQEAVKLCPTN). The span at 1421-1431 (QRSQQQKQQGP) shows a compositional bias: low complexity. Disordered regions lie at residues 1421–1485 (QRSQ…SVPS) and 1636–1696 (VAVD…KVQG). A Phosphoserine modification is found at serine 1439. 2 stretches are compositionally biased toward low complexity: residues 1467-1485 (QEESVSPTPRSQPSSSVPS) and 1659-1689 (SLTSSGSSGSPSSSIKMSSSTSSLTSSSSFS). Serine 1668, serine 1676, and serine 1677 each carry phosphoserine.

This sequence belongs to the TANC family. In terms of assembly, interacts probably directly with DLG1, DLG4, HOMER1. Interacts with DLGAP1, INA, CAMK2A, GRIN2B and GRIA1. Interacts with TNIK. Interacts with MINK1. Post-translationally, phosphorylated; by MINK1 and TNIK upon stimulation by RAP2A.

It is found in the postsynaptic density. Its function is as follows. May be a scaffold component in the postsynaptic density. The polypeptide is Protein TANC1 (TANC1) (Homo sapiens (Human)).